Here is a 607-residue protein sequence, read N- to C-terminus: Methylmalonate-semialdehyde dehydrogenase [acylating], mitochondrial (607 aa).

The disordered stretch occupies residues 1–69 (MVRVKQKNLE…KLRSSSSTTT (69 aa)). A mitochondrion-targeting transit peptide spans 1–98 (MVRVKQKNLE…QFLALRSSWL (98 aa)). Over residues 9–30 (LESYRSNGTYPPTWRNPTTSFA) the composition is skewed to polar residues. Residues 42–51 (LKSKTKRRRL) show a composition bias toward basic residues. Residues F259, K283, E286, K287, and S336 each contribute to the NAD(+) site. C391 (nucleophile) is an active-site residue. Position 491 (E491) interacts with NAD(+).

The protein belongs to the aldehyde dehydrogenase family.

It is found in the mitochondrion. It carries out the reaction 2-methyl-3-oxopropanoate + NAD(+) + CoA + H2O = propanoyl-CoA + hydrogencarbonate + NADH + H(+). In Arabidopsis thaliana (Mouse-ear cress), this protein is Methylmalonate-semialdehyde dehydrogenase [acylating], mitochondrial (ALDH6B2).